Consider the following 335-residue polypeptide: N-acetyl-gamma-glutamyl-phosphate reductase (335 aa).

Cysteine 156 is an active-site residue.

The protein belongs to the NAGSA dehydrogenase family. Type 1 subfamily.

It localises to the cytoplasm. It carries out the reaction N-acetyl-L-glutamate 5-semialdehyde + phosphate + NADP(+) = N-acetyl-L-glutamyl 5-phosphate + NADPH + H(+). It participates in amino-acid biosynthesis; L-arginine biosynthesis; N(2)-acetyl-L-ornithine from L-glutamate: step 3/4. Functionally, catalyzes the NADPH-dependent reduction of N-acetyl-5-glutamyl phosphate to yield N-acetyl-L-glutamate 5-semialdehyde. This chain is N-acetyl-gamma-glutamyl-phosphate reductase, found in Aeromonas salmonicida (strain A449).